A 201-amino-acid polypeptide reads, in one-letter code: Nascent polypeptide-associated complex subunit alpha (201 aa).

Residues methionine 1–aspartate 20 show a composition bias toward basic and acidic residues. Disordered regions lie at residues methionine 1 to glutamate 51 and alanine 118 to lysine 165. A compositionally biased stretch (acidic residues) spans aspartate 21 to threonine 36. The NAC-A/B domain occupies serine 48–alanine 113. Basic and acidic residues predominate over residues glycine 126–glutamate 149. The segment covering glutamate 150 to glycine 161 has biased composition (acidic residues). One can recognise a UBA domain in the interval isoleucine 162–serine 200.

It belongs to the NAC-alpha family. As to quaternary structure, part of the nascent polypeptide-associated complex (NAC), consisting of EGD2 and EGD1. NAC associates with ribosomes via EGD1.

It is found in the cytoplasm. The protein localises to the nucleus. Component of the nascent polypeptide-associated complex (NAC), a dynamic component of the ribosomal exit tunnel, protecting the emerging polypeptides from interaction with other cytoplasmic proteins to ensure appropriate nascent protein targeting. The NAC complex also promotes mitochondrial protein import by enhancing productive ribosome interactions with the outer mitochondrial membrane and blocks the inappropriate interaction of ribosomes translating non-secretory nascent polypeptides with translocation sites in the membrane of the endoplasmic reticulum. EGD2 may also be involved in transcription regulation. This chain is Nascent polypeptide-associated complex subunit alpha (EGD2), found in Pyricularia oryzae (strain 70-15 / ATCC MYA-4617 / FGSC 8958) (Rice blast fungus).